The sequence spans 192 residues: Small ribosomal subunit protein uS5 (192 aa).

The 64-residue stretch at Phe20–Val83 folds into the S5 DRBM domain. Residues Ser162–Ala192 form a disordered region.

This sequence belongs to the universal ribosomal protein uS5 family. As to quaternary structure, part of the 30S ribosomal subunit. Contacts proteins S4 and S8.

With S4 and S12 plays an important role in translational accuracy. In terms of biological role, located at the back of the 30S subunit body where it stabilizes the conformation of the head with respect to the body. This chain is Small ribosomal subunit protein uS5, found in Methylorubrum populi (strain ATCC BAA-705 / NCIMB 13946 / BJ001) (Methylobacterium populi).